Reading from the N-terminus, the 71-residue chain is DNA-directed RNA polymerase subunit omega (71 aa).

It belongs to the RNA polymerase subunit omega family. As to quaternary structure, the RNAP catalytic core consists of 2 alpha, 1 beta, 1 beta' and 1 omega subunit. When a sigma factor is associated with the core the holoenzyme is formed, which can initiate transcription.

It carries out the reaction RNA(n) + a ribonucleoside 5'-triphosphate = RNA(n+1) + diphosphate. Functionally, promotes RNA polymerase assembly. Latches the N- and C-terminal regions of the beta' subunit thereby facilitating its interaction with the beta and alpha subunits. The protein is DNA-directed RNA polymerase subunit omega of Campylobacter concisus (strain 13826).